The primary structure comprises 221 residues: MASFTVGIVVFPGSNCDRDVSWALEGCLDIKTKFLWHESSDLNDVDSIVLPGGFSYGDYLRCGAIARFSPLINSLHDFIKSGRRVLGICNGFQILTESGFLPGALVANKNLNFICDDVDLNVITSKGGWFQKLNENQNIKLPIAHGEGCYHCDQDTLKRLVDNDLIALKYKTNPNGSTSDIAGITNEKGNVLGLMPHPERACDESIGGIDGLYTLRSLITQ.

The region spanning Thr5–Gln221 is the Glutamine amidotransferase type-1 domain. Cys89 serves as the catalytic Nucleophile. Active-site residues include His197 and Glu199.

As to quaternary structure, part of the FGAM synthase complex composed of 1 PurL, 1 PurQ and 2 PurS subunits.

The protein localises to the cytoplasm. The enzyme catalyses N(2)-formyl-N(1)-(5-phospho-beta-D-ribosyl)glycinamide + L-glutamine + ATP + H2O = 2-formamido-N(1)-(5-O-phospho-beta-D-ribosyl)acetamidine + L-glutamate + ADP + phosphate + H(+). The catalysed reaction is L-glutamine + H2O = L-glutamate + NH4(+). It functions in the pathway purine metabolism; IMP biosynthesis via de novo pathway; 5-amino-1-(5-phospho-D-ribosyl)imidazole from N(2)-formyl-N(1)-(5-phospho-D-ribosyl)glycinamide: step 1/2. In terms of biological role, part of the phosphoribosylformylglycinamidine synthase complex involved in the purines biosynthetic pathway. Catalyzes the ATP-dependent conversion of formylglycinamide ribonucleotide (FGAR) and glutamine to yield formylglycinamidine ribonucleotide (FGAM) and glutamate. The FGAM synthase complex is composed of three subunits. PurQ produces an ammonia molecule by converting glutamine to glutamate. PurL transfers the ammonia molecule to FGAR to form FGAM in an ATP-dependent manner. PurS interacts with PurQ and PurL and is thought to assist in the transfer of the ammonia molecule from PurQ to PurL. The sequence is that of Phosphoribosylformylglycinamidine synthase subunit PurQ from Prochlorococcus marinus subsp. pastoris (strain CCMP1986 / NIES-2087 / MED4).